The primary structure comprises 198 residues: ATP synthase subunit b (198 aa).

The helical transmembrane segment at 25–45 threads the bilayer; that stretch reads PLSELLIGTLAFGLLVAFFFW.

It belongs to the ATPase B chain family. In terms of assembly, F-type ATPases have 2 components, F(1) - the catalytic core - and F(0) - the membrane proton channel. F(1) has five subunits: alpha(3), beta(3), gamma(1), delta(1), epsilon(1). F(0) has three main subunits: a(1), b(2) and c(10-14). The alpha and beta chains form an alternating ring which encloses part of the gamma chain. F(1) is attached to F(0) by a central stalk formed by the gamma and epsilon chains, while a peripheral stalk is formed by the delta and b chains.

Its subcellular location is the cell membrane. In terms of biological role, f(1)F(0) ATP synthase produces ATP from ADP in the presence of a proton or sodium gradient. F-type ATPases consist of two structural domains, F(1) containing the extramembraneous catalytic core and F(0) containing the membrane proton channel, linked together by a central stalk and a peripheral stalk. During catalysis, ATP synthesis in the catalytic domain of F(1) is coupled via a rotary mechanism of the central stalk subunits to proton translocation. Its function is as follows. Component of the F(0) channel, it forms part of the peripheral stalk, linking F(1) to F(0). This chain is ATP synthase subunit b, found in Frankia alni (strain DSM 45986 / CECT 9034 / ACN14a).